A 192-amino-acid polypeptide reads, in one-letter code: MITISDAAQAHFVKLLADQPEGTHIRVFVISPGTAQAECGVSYCPPDAVESDDIELEFNGFSAMVDEKSAPFLEEASIDFVTDQLGSQLTLKAPNAKMRKVSSDAPLAERVEYVIQSEINPQLASHGGNIMLVEITQEGVAVLQFGGGCNGCSQVDITLKDGIEKQLLDMFPGELTGVRDVTDHQHGEHSYA.

[4Fe-4S] cluster-binding residues include Cys149 and Cys152.

This sequence belongs to the NfuA family. In terms of assembly, homodimer. The cofactor is [4Fe-4S] cluster.

In terms of biological role, involved in iron-sulfur cluster biogenesis. Binds a 4Fe-4S cluster, can transfer this cluster to apoproteins, and thereby intervenes in the maturation of Fe/S proteins. Could also act as a scaffold/chaperone for damaged Fe/S proteins. The chain is Fe/S biogenesis protein NfuA from Shewanella sp. (strain MR-7).